Reading from the N-terminus, the 68-residue chain is DNA-directed RNA polymerase subunit omega (68 aa).

Belongs to the RNA polymerase subunit omega family. In terms of assembly, the RNAP catalytic core consists of 2 alpha, 1 beta, 1 beta' and 1 omega subunit. When a sigma factor is associated with the core the holoenzyme is formed, which can initiate transcription.

It catalyses the reaction RNA(n) + a ribonucleoside 5'-triphosphate = RNA(n+1) + diphosphate. Functionally, promotes RNA polymerase assembly. Latches the N- and C-terminal regions of the beta' subunit thereby facilitating its interaction with the beta and alpha subunits. The protein is DNA-directed RNA polymerase subunit omega of Dechloromonas aromatica (strain RCB).